Consider the following 250-residue polypeptide: Peroxiredoxin (250 aa).

A Thioredoxin domain is found at 6 to 163 (PLIGERFPEM…ILRIVKALKL (158 aa)). Residue cysteine 50 is the Cysteine sulfenic acid (-SOH) intermediate of the active site. Arginine 126 is a binding site for substrate. An intrachain disulfide couples cysteine 207 to cysteine 213.

It belongs to the peroxiredoxin family. Prx6 subfamily. Homodecamer. Pentamer of dimers that assemble into a ring structure.

Its subcellular location is the cytoplasm. It carries out the reaction a hydroperoxide + [thioredoxin]-dithiol = an alcohol + [thioredoxin]-disulfide + H2O. Thiol-specific peroxidase that catalyzes the reduction of hydrogen peroxide and organic hydroperoxides to water and alcohols, respectively. Plays a role in cell protection against oxidative stress by detoxifying peroxides. This is Peroxiredoxin from Aeropyrum pernix (strain ATCC 700893 / DSM 11879 / JCM 9820 / NBRC 100138 / K1).